The chain runs to 387 residues: Testis-expressed protein 9 (387 aa).

Disordered stretches follow at residues 1 to 25 (MAGR…LAAG) and 58 to 133 (REQQ…LKYP). Composition is skewed to polar residues over residues 70-91 (ALTT…SSEG) and 103-115 (KNTG…QNRL). Residues 184-347 (IGTEAQIRFL…ERQKGELMIG (164 aa)) adopt a coiled-coil conformation.

Testis-specific.

It is found in the cytoplasm. The protein resides in the cytoskeleton. It localises to the microtubule organizing center. The protein localises to the centrosome. Its subcellular location is the centriolar satellite. This is Testis-expressed protein 9 (Tex9) from Mus musculus (Mouse).